The primary structure comprises 484 residues: Regulator of G-protein signaling 9 (484 aa).

The DEP domain maps to 30–105 (PDTGVRVQNQ…PDSSLYRFQT (76 aa)). A G protein gamma domain is found at 219-280 (VVSVRKEIMY…ITDDTQFWDL (62 aa)). In terms of domain architecture, RGS spans 299 to 414 (NFSELIRDPK…LKSPIYKEML (116 aa)). A disordered region spans residues 460 to 484 (TTVDITQVMSKLDRRSQLRKEPPPK). Basic and acidic residues predominate over residues 470–484 (KLDRRSQLRKEPPPK).

In terms of assembly, heterodimer with GNB5. Interacts with RGS7BP, leading to regulate the subcellular location of the heterodimer formed with GNB5. Component of the RGS9-1-Gbeta5 complex composed of RGS9 (RGS9-1), Gbeta5 (GNB5) and RGS9BP. Interacts with PDE6G and GNAT1. Post-translationally, phosphorylation is decreased by light exposition. As to expression, photoreceptor outer segments.

Its subcellular location is the membrane. In terms of biological role, inhibits signal transduction by increasing the GTPase activity of G protein alpha subunits thereby driving them into their inactive GDP-bound form. Binds to GNAT1. Involved in phototransduction; key element in the recovery phase of visual transduction. The protein is Regulator of G-protein signaling 9 (RGS9) of Bos taurus (Bovine).